Reading from the N-terminus, the 345-residue chain is Phosphoribosylformylglycinamidine cyclo-ligase (345 aa).

It belongs to the AIR synthase family.

It localises to the cytoplasm. It catalyses the reaction 2-formamido-N(1)-(5-O-phospho-beta-D-ribosyl)acetamidine + ATP = 5-amino-1-(5-phospho-beta-D-ribosyl)imidazole + ADP + phosphate + H(+). It participates in purine metabolism; IMP biosynthesis via de novo pathway; 5-amino-1-(5-phospho-D-ribosyl)imidazole from N(2)-formyl-N(1)-(5-phospho-D-ribosyl)glycinamide: step 2/2. This chain is Phosphoribosylformylglycinamidine cyclo-ligase, found in Escherichia coli (strain 55989 / EAEC).